The sequence spans 282 residues: 2-dehydro-3-deoxyphosphooctonate aldolase (282 aa).

This sequence belongs to the KdsA family.

It localises to the cytoplasm. It carries out the reaction D-arabinose 5-phosphate + phosphoenolpyruvate + H2O = 3-deoxy-alpha-D-manno-2-octulosonate-8-phosphate + phosphate. Its pathway is carbohydrate biosynthesis; 3-deoxy-D-manno-octulosonate biosynthesis; 3-deoxy-D-manno-octulosonate from D-ribulose 5-phosphate: step 2/3. It participates in bacterial outer membrane biogenesis; lipopolysaccharide biosynthesis. In Shewanella piezotolerans (strain WP3 / JCM 13877), this protein is 2-dehydro-3-deoxyphosphooctonate aldolase.